The following is a 762-amino-acid chain: Acyl-homoserine lactone acylase PvdQ (762 aa).

The N-terminal stretch at Met1–Ala23 is a signal peptide. Residues Ala194 to Gly216 constitute a propeptide, spacer peptide. Ser217 (nucleophile) is an active-site residue.

It belongs to the peptidase S45 family. As to quaternary structure, heterodimer of an alpha subunit and a beta subunit processed from the same precursor.

The protein resides in the periplasm. It catalyses the reaction an N-acyl-L-homoserine lactone + H2O = L-homoserine lactone + a carboxylate. In terms of biological role, catalyzes the deacylation of acyl-homoserine lactone (AHL or acyl-HSL), releasing homoserine lactone (HSL) and the corresponding fatty acid. Possesses a specificity for the degradation of long-chain acyl-HSLs (side chains of 11 to 14 carbons in length). Degrades 3-oxo-C12-HSL, one of the two main AHL signal molecules of P.aeruginosa, and thereby functions as a quorum quencher, inhibiting the las quorum-sensing system. Therefore, may enable P.aeruginosa to modulate its own quorum-sensing-dependent pathogenic potential. Also appears to be required for pyoverdin biosynthesis. In Pseudomonas aeruginosa (strain ATCC 15692 / DSM 22644 / CIP 104116 / JCM 14847 / LMG 12228 / 1C / PRS 101 / PAO1), this protein is Acyl-homoserine lactone acylase PvdQ (pvdQ).